Reading from the N-terminus, the 747-residue chain is Catalase-peroxidase 1 (747 aa).

Residues 1 to 22 (MTDTSDARPPHSDDKTRSHSES) are compositionally biased toward basic and acidic residues. Positions 1–39 (MTDTSDARPPHSDDKTRSHSESENPAIDSPEPKVHAPLT) are disordered. A cross-link (tryptophyl-tyrosyl-methioninium (Trp-Tyr) (with M-266)) is located at residues 112–240 (WHAAGTYRIF…FGATTMGLIY (129 aa)). The active-site Proton acceptor is the His113. A cross-link (tryptophyl-tyrosyl-methioninium (Tyr-Met) (with W-112)) is located at residues 240–266 (YVNPEGPEGKPDPLAAAHDIRETFGRM). His281 contacts heme b.

It belongs to the peroxidase family. Peroxidase/catalase subfamily. As to quaternary structure, homodimer or homotetramer. Heme b serves as cofactor. Formation of the three residue Trp-Tyr-Met cross-link is important for the catalase, but not the peroxidase activity of the enzyme.

It catalyses the reaction H2O2 + AH2 = A + 2 H2O. The catalysed reaction is 2 H2O2 = O2 + 2 H2O. In terms of biological role, bifunctional enzyme with both catalase and broad-spectrum peroxidase activity. This chain is Catalase-peroxidase 1, found in Mycolicibacterium vanbaalenii (strain DSM 7251 / JCM 13017 / BCRC 16820 / KCTC 9966 / NRRL B-24157 / PYR-1) (Mycobacterium vanbaalenii).